Consider the following 214-residue polypeptide: Type 4 apparatus protein DotN (214 aa).

Cys52, Cys55, Cys84, and Cys87 together coordinate Zn(2+).

The T4BSS is a complex nanomachine composed of several subcomplexes. This subunit is part of the Type IV Coupling Complex (T4CC), a subcomplex composed of the DotLMNYZ core and the IcmSW-LvgA adapter subunits, linked by the C-terminal tail of DotL. Six DotLMNYZ hetero-pentameric units may assemble into a hexameric nanomachine, forming an inner membrane channel for effectors to pass through. Interacts directly with DotL. Interacts with DotZ.

It localises to the cytoplasm. Component of the Dot/Icm type IVB secretion system (T4BSS), which is used to inject bacterial effector proteins into eukaryotic host cells. Part of a subcomplex which recruits effector proteins and delivers them to the core transmembrane subcomplex. The sequence is that of Type 4 apparatus protein DotN from Legionella pneumophila subsp. pneumophila (strain Philadelphia 1 / ATCC 33152 / DSM 7513).